A 563-amino-acid chain; its full sequence is Arginine--tRNA ligase (563 aa).

The 'HIGH' region motif lies at 121–131; sequence PNIAKPFSIGH.

The protein belongs to the class-I aminoacyl-tRNA synthetase family. Monomer.

The protein resides in the cytoplasm. The catalysed reaction is tRNA(Arg) + L-arginine + ATP = L-arginyl-tRNA(Arg) + AMP + diphosphate. The protein is Arginine--tRNA ligase of Streptococcus equi subsp. equi (strain 4047).